A 339-amino-acid polypeptide reads, in one-letter code: MVREEVAGSTQTLQWKCVESRVDSKRLYYGRFILSPLRKGQADTVGIALRRALLGEIEGTCITRAKFGSVPHEYSTIAGIEESVQEILLNLKEIVLRSNLYGVRDASICVKGPRYITAQDIILPPSVEIVDTAQPIANLTEPIDFCIDLQIKRDRGYQTELRKNYQDGSYPIDAVSMPVRNLNYSIFSCGNGNEKHEILFLEIWTNGSLTPKEALYEASRNLIDLFLPFLHAEEEGTSFEENKNRFTPPLFTFQKRLTNLKKNKKGIPLNCIFIDQLELTSRTYNCLKRANIHTLLDLLSKTEEDLLRIDSFRMEDRKHIWDTLEKHLPIDLLKNKLSF.

The interval 1–233 (MVREEVAGST…DLFLPFLHAE (233 aa)) is alpha N-terminal domain (alpha-NTD). The tract at residues 264-339 (KKGIPLNCIF…IDLLKNKLSF (76 aa)) is alpha C-terminal domain (alpha-CTD).

It belongs to the RNA polymerase alpha chain family. In terms of assembly, in plastids the minimal PEP RNA polymerase catalytic core is composed of four subunits: alpha, beta, beta', and beta''. When a (nuclear-encoded) sigma factor is associated with the core the holoenzyme is formed, which can initiate transcription.

The protein localises to the plastid. The protein resides in the chloroplast. It carries out the reaction RNA(n) + a ribonucleoside 5'-triphosphate = RNA(n+1) + diphosphate. Its function is as follows. DNA-dependent RNA polymerase catalyzes the transcription of DNA into RNA using the four ribonucleoside triphosphates as substrates. The sequence is that of DNA-directed RNA polymerase subunit alpha from Festucopsis festucoides.